The chain runs to 432 residues: Alcohol acyltransferase 9 (432 aa).

Catalysis depends on proton acceptor residues His-156 and Asp-379.

The protein belongs to the plant acyltransferase family. In terms of tissue distribution, expressed in fruit.

The catalysed reaction is 2-(methylsulfanyl)acetyl-CoA + butan-1-ol = butyl 2-(methylsulfanyl)acetate + CoA. It carries out the reaction ethanol + acetyl-CoA = ethyl acetate + CoA. It catalyses the reaction butan-1-ol + acetyl-CoA = butyl acetate + CoA. The enzyme catalyses butan-1-ol + propanoyl-CoA = butyl propanoate + CoA. Functionally, involved in the biosynthesis of volatile esters which confer kiwifruit flavor. Alcohol acyl transferase that can use a wide range of alcohols as substrate to produce esters. Exhibits acetyl-CoA:alcohol O-acyltransferase activity. The protein is Alcohol acyltransferase 9 of Actinidia deliciosa (Kiwi).